The sequence spans 166 residues: NADH-quinone oxidoreductase subunit E (166 aa).

Positions 92, 97, 133, and 137 each coordinate [2Fe-2S] cluster.

Belongs to the complex I 24 kDa subunit family. Composed of 13 different subunits. Subunits NuoCD, E, F, and G constitute the peripheral sector of the complex. The cofactor is [2Fe-2S] cluster.

It catalyses the reaction a quinone + NADH + 5 H(+)(in) = a quinol + NAD(+) + 4 H(+)(out). In terms of biological role, NDH-1 shuttles electrons from NADH, via FMN and iron-sulfur (Fe-S) centers, to quinones in the respiratory chain. The immediate electron acceptor for the enzyme in this species is believed to be ubiquinone. Couples the redox reaction to proton translocation (for every two electrons transferred, four hydrogen ions are translocated across the cytoplasmic membrane), and thus conserves the redox energy in a proton gradient. The sequence is that of NADH-quinone oxidoreductase subunit E (nuoE) from Salmonella typhi.